The sequence spans 298 residues: N-acetylmuramic acid 6-phosphate etherase (298 aa).

Residues 55–218 form the SIS domain; that stretch reads ITESLRRGGR…STASMVRLGK (164 aa). The active-site Proton donor is Glu83. The active site involves Glu114.

It belongs to the GCKR-like family. MurNAc-6-P etherase subfamily. As to quaternary structure, homodimer.

The enzyme catalyses N-acetyl-D-muramate 6-phosphate + H2O = N-acetyl-D-glucosamine 6-phosphate + (R)-lactate. Its pathway is amino-sugar metabolism; N-acetylmuramate degradation. In terms of biological role, specifically catalyzes the cleavage of the D-lactyl ether substituent of MurNAc 6-phosphate, producing GlcNAc 6-phosphate and D-lactate. The chain is N-acetylmuramic acid 6-phosphate etherase from Mycolicibacterium smegmatis (strain ATCC 700084 / mc(2)155) (Mycobacterium smegmatis).